The primary structure comprises 236 residues: UPF0502 protein Bamb_4889 (236 aa).

Belongs to the UPF0502 family.

The sequence is that of UPF0502 protein Bamb_4889 from Burkholderia ambifaria (strain ATCC BAA-244 / DSM 16087 / CCUG 44356 / LMG 19182 / AMMD) (Burkholderia cepacia (strain AMMD)).